Here is a 90-residue protein sequence, read N- to C-terminus: Probable Fe(2+)-trafficking protein (90 aa).

It belongs to the Fe(2+)-trafficking protein family.

Its function is as follows. Could be a mediator in iron transactions between iron acquisition and iron-requiring processes, such as synthesis and/or repair of Fe-S clusters in biosynthetic enzymes. The protein is Probable Fe(2+)-trafficking protein of Pseudoalteromonas translucida (strain TAC 125).